The chain runs to 119 residues: Ribosome-binding factor A (119 aa).

It belongs to the RbfA family. Monomer. Binds 30S ribosomal subunits, but not 50S ribosomal subunits or 70S ribosomes.

Its subcellular location is the cytoplasm. Its function is as follows. One of several proteins that assist in the late maturation steps of the functional core of the 30S ribosomal subunit. Associates with free 30S ribosomal subunits (but not with 30S subunits that are part of 70S ribosomes or polysomes). Required for efficient processing of 16S rRNA. May interact with the 5'-terminal helix region of 16S rRNA. In Wolinella succinogenes (strain ATCC 29543 / DSM 1740 / CCUG 13145 / JCM 31913 / LMG 7466 / NCTC 11488 / FDC 602W) (Vibrio succinogenes), this protein is Ribosome-binding factor A.